We begin with the raw amino-acid sequence, 761 residues long: Ribonucleoside-diphosphate reductase subunit alpha (761 aa).

The 91-residue stretch at 5-95 folds into the ATP-cone domain; sequence LFVTKRNGKI…IFHLRKKAFG (91 aa). Residues Lys9, 15–21, Thr55, and Lys91 each bind ATP; that span reads ELINLDK. Residue Thr209 coordinates GDP. Cys225 and Cys462 form a disulfide bridge. DTTP is bound by residues 232–234, Arg262, and Arg269; that span reads DNL. Asn437 provides a ligand contact to GDP. Asn437 serves as the catalytic Proton acceptor. The active-site Cysteine radical intermediate is Cys439. GDP is bound by residues Glu441 and 623–625; that span reads ETS. Glu441 (proton acceptor) is an active-site residue.

It belongs to the ribonucleoside diphosphate reductase large chain family. Tetramer of two alpha and two beta subunits.

It catalyses the reaction a 2'-deoxyribonucleoside 5'-diphosphate + [thioredoxin]-disulfide + H2O = a ribonucleoside 5'-diphosphate + [thioredoxin]-dithiol. With respect to regulation, under complex allosteric control mediated by deoxynucleoside triphosphates and ATP binding to separate specificity and activation sites on the alpha subunit. The type of nucleotide bound at the specificity site determines substrate preference. It seems probable that ATP makes the enzyme reduce CDP and UDP, dGTP favors ADP reduction and dTTP favors GDP reduction. Stimulated by ATP and inhibited by dATP binding to the activity site. In terms of biological role, provides the precursors necessary for DNA synthesis. Catalyzes the biosynthesis of deoxyribonucleotides from the corresponding ribonucleotides. The polypeptide is Ribonucleoside-diphosphate reductase subunit alpha (nrdA) (Buchnera aphidicola subsp. Baizongia pistaciae (strain Bp)).